Reading from the N-terminus, the 633-residue chain is 1-deoxy-D-xylulose-5-phosphate synthase (633 aa).

Thiamine diphosphate-binding positions include histidine 72 and 113–115 (GHS). Aspartate 144 is a binding site for Mg(2+). Thiamine diphosphate is bound by residues 145-146 (GA), asparagine 173, tyrosine 284, and glutamate 367. Mg(2+) is bound at residue asparagine 173.

It belongs to the transketolase family. DXPS subfamily. Homodimer. The cofactor is Mg(2+). Thiamine diphosphate is required as a cofactor.

The enzyme catalyses D-glyceraldehyde 3-phosphate + pyruvate + H(+) = 1-deoxy-D-xylulose 5-phosphate + CO2. The protein operates within metabolic intermediate biosynthesis; 1-deoxy-D-xylulose 5-phosphate biosynthesis; 1-deoxy-D-xylulose 5-phosphate from D-glyceraldehyde 3-phosphate and pyruvate: step 1/1. Catalyzes the acyloin condensation reaction between C atoms 2 and 3 of pyruvate and glyceraldehyde 3-phosphate to yield 1-deoxy-D-xylulose-5-phosphate (DXP). The polypeptide is 1-deoxy-D-xylulose-5-phosphate synthase (Bacillus velezensis (strain DSM 23117 / BGSC 10A6 / LMG 26770 / FZB42) (Bacillus amyloliquefaciens subsp. plantarum)).